A 150-amino-acid chain; its full sequence is Lymphotoxin-beta (150 aa).

Residues Ala-1–Val-149 enclose the THD domain. Asn-128 carries N-linked (GlcNAc...) asparagine glycosylation.

It belongs to the tumor necrosis factor family. In terms of assembly, heterotrimer of either two LTB and one LTA subunits or (less prevalent) two LTA and one LTB subunits.

It localises to the membrane. Its function is as follows. Cytokine that binds to LTBR/TNFRSF3. May play a specific role in immune response regulation. Provides the membrane anchor for the attachment of the heterotrimeric complex to the cell surface. The protein is Lymphotoxin-beta (LTB) of Sus scrofa (Pig).